The following is a 137-amino-acid chain: Putative pre-16S rRNA nuclease (137 aa).

Belongs to the YqgF nuclease family.

The protein resides in the cytoplasm. Its function is as follows. Could be a nuclease involved in processing of the 5'-end of pre-16S rRNA. The polypeptide is Putative pre-16S rRNA nuclease (Clostridium botulinum (strain 657 / Type Ba4)).